Consider the following 78-residue polypeptide: Acyl carrier protein (78 aa).

The Carrier domain maps to 2–77 (STIEERVKKI…AAIDYILSHQ (76 aa)). O-(pantetheine 4'-phosphoryl)serine is present on Ser37.

Belongs to the acyl carrier protein (ACP) family. In terms of processing, 4'-phosphopantetheine is transferred from CoA to a specific serine of apo-ACP by AcpS. This modification is essential for activity because fatty acids are bound in thioester linkage to the sulfhydryl of the prosthetic group.

The protein resides in the cytoplasm. The protein operates within lipid metabolism; fatty acid biosynthesis. In terms of biological role, carrier of the growing fatty acid chain in fatty acid biosynthesis. This chain is Acyl carrier protein, found in Tolumonas auensis (strain DSM 9187 / NBRC 110442 / TA 4).